Here is a 113-residue protein sequence, read N- to C-terminus: Gas vesicle protein I2 (113 aa).

Positions 1–93 (MTPTNRHTHG…TVPEQPTHAT (93 aa)) are disordered. The span at 11 to 22 (QNAQHARRNAQQ) shows a compositional bias: low complexity. Positions 52–63 (EQPTSDTTNPAA) are enriched in polar residues. The span at 69–81 (AQRTNAQNAARNA) shows a compositional bias: low complexity. The segment covering 82 to 93 (HSTVPEQPTHAT) has biased composition (polar residues).

Belongs to the gas vesicle GvpI family. In terms of assembly, gvpF to GvpM interact with each other in vitro, and may form multi-subunit complex(es). Interacts with GvpC and GvpO.

The protein localises to the gas vesicle. Proteins GvpF to GvpM might be involved in nucleating gas vesicle formation. A minor component of the gas vesicle. Gas vesicles are hollow, gas filled proteinaceous nanostructures found in several microbial planktonic microorganisms. They allow positioning of halobacteria at the optimal depth for growth in the poorly aerated, shallow brine pools of their habitat. In terms of biological role, expression of 2 c-vac DNA fragments containing 2 divergently transcribed regions (gvpE-gvpF-gvpG-gvpH-gvpI-gvpJ-gvpK-gvpL-gvpM and gvpA-gvpC-gvpN-gvpO) allows H.volcanii to produce gas vesicles. This Halobacterium salinarum (strain ATCC 700922 / JCM 11081 / NRC-1) (Halobacterium halobium) protein is Gas vesicle protein I2.